A 508-amino-acid chain; its full sequence is Photosystem II CP47 reaction center protein (508 aa).

A run of 6 helical transmembrane segments spans residues 21-36, 101-115, 140-156, 203-218, 237-252, and 457-472; these read SVHLMHTALVSGWAGS, IILSGLLFLAAIWHW, GIHLFLSGVLCFSFGAF, IAAGVLGILAGLFHLS, VLSSSIAAVFFAAFVV, and TFALIFFFGHIWHGAR.

The protein belongs to the PsbB/PsbC family. PsbB subfamily. In terms of assembly, PSII is composed of 1 copy each of membrane proteins PsbA, PsbB, PsbC, PsbD, PsbE, PsbF, PsbH, PsbI, PsbJ, PsbK, PsbL, PsbM, PsbT, PsbX, PsbY, PsbZ, Psb30/Ycf12, at least 3 peripheral proteins of the oxygen-evolving complex and a large number of cofactors. It forms dimeric complexes. The cofactor is Binds multiple chlorophylls. PSII binds additional chlorophylls, carotenoids and specific lipids..

Its subcellular location is the plastid. The protein resides in the chloroplast thylakoid membrane. In terms of biological role, one of the components of the core complex of photosystem II (PSII). It binds chlorophyll and helps catalyze the primary light-induced photochemical processes of PSII. PSII is a light-driven water:plastoquinone oxidoreductase, using light energy to abstract electrons from H(2)O, generating O(2) and a proton gradient subsequently used for ATP formation. This is Photosystem II CP47 reaction center protein from Adiantum capillus-veneris (Maidenhair fern).